Consider the following 184-residue polypeptide: ATP synthase subunit delta (184 aa).

The protein belongs to the ATPase delta chain family. F-type ATPases have 2 components, F(1) - the catalytic core - and F(0) - the membrane proton channel. F(1) has five subunits: alpha(3), beta(3), gamma(1), delta(1), epsilon(1). F(0) has three main subunits: a(1), b(2) and c(10-14). The alpha and beta chains form an alternating ring which encloses part of the gamma chain. F(1) is attached to F(0) by a central stalk formed by the gamma and epsilon chains, while a peripheral stalk is formed by the delta and b chains.

It is found in the cell inner membrane. Functionally, f(1)F(0) ATP synthase produces ATP from ADP in the presence of a proton or sodium gradient. F-type ATPases consist of two structural domains, F(1) containing the extramembraneous catalytic core and F(0) containing the membrane proton channel, linked together by a central stalk and a peripheral stalk. During catalysis, ATP synthesis in the catalytic domain of F(1) is coupled via a rotary mechanism of the central stalk subunits to proton translocation. This protein is part of the stalk that links CF(0) to CF(1). It either transmits conformational changes from CF(0) to CF(1) or is implicated in proton conduction. In Dichelobacter nodosus (strain VCS1703A), this protein is ATP synthase subunit delta.